The following is a 232-amino-acid chain: Large ribosomal subunit protein uL1 (232 aa).

This sequence belongs to the universal ribosomal protein uL1 family. As to quaternary structure, part of the 50S ribosomal subunit.

Binds directly to 23S rRNA. The L1 stalk is quite mobile in the ribosome, and is involved in E site tRNA release. In terms of biological role, protein L1 is also a translational repressor protein, it controls the translation of the L11 operon by binding to its mRNA. In Bordetella petrii (strain ATCC BAA-461 / DSM 12804 / CCUG 43448), this protein is Large ribosomal subunit protein uL1.